Reading from the N-terminus, the 201-residue chain is Ribosome maturation factor RimP (201 aa).

The segment at 180–201 (LRRGSAPAQDEEGEDEAPGAPL) is disordered. Acidic residues predominate over residues 188–201 (QDEEGEDEAPGAPL).

The protein belongs to the RimP family.

Its subcellular location is the cytoplasm. Its function is as follows. Required for maturation of 30S ribosomal subunits. The polypeptide is Ribosome maturation factor RimP (Methylobacterium sp. (strain 4-46)).